We begin with the raw amino-acid sequence, 1122 residues long: Histone deacetylase 5 (1122 aa).

The tract at residues 1–22 (MNSPNESDGMSGREPSLEILPR) is disordered. Residue lysine 35 forms a Glycyl lysine isopeptide (Lys-Gly) (interchain with G-Cter in SUMO2) linkage. The disordered stretch occupies residues 196 to 281 (KEPTPGGLNH…KVAERRSSPL (86 aa)). The segment covering 247 to 258 (DSRDDFPLRKTA) has biased composition (basic and acidic residues). Serine 259 carries the phosphoserine; by AMPK, CaMK1, SIK1 and PKD/PRKD1 modification. The span at 272-281 (KVAERRSSPL) shows a compositional bias: basic and acidic residues. Threonine 292 is subject to Phosphothreonine; by PKC. 2 disordered regions span residues 302 to 343 (GAGP…NIPT) and 481 to 504 (MRTV…LPQS). Residues 312–327 (NSAPGSGPSSPNSSHS) show a composition bias toward low complexity. Polar residues predominate over residues 328–340 (TIAENGFTGSVPN). The segment covering 494–504 (SRTQSSPLPQS) has biased composition (low complexity). Serine 498 carries the post-translational modification Phosphoserine; by AMPK, CaMK1, SIK1 and PKD/PRKD1. Position 533 is an N6-acetyllysine (lysine 533). Positions 536 to 625 (TKTGELPRQP…GPDLEEPGAG (90 aa)) are disordered. Residues 581 to 621 (STQEDLEEEDEEEDGEEEEDCIQVKDEEGESGAEEGPDLEE) are compositionally biased toward acidic residues. 2 positions are modified to phosphoserine: serine 611 and serine 661. Positions 684–1028 (GVVYDTFMLK…VSALLSVELQ (345 aa)) are histone deacetylase. The Zn(2+) site is built by cysteine 696, cysteine 698, histidine 704, and cysteine 781. Residue histidine 833 is part of the active site. Positions 1081–1122 (EEAETVSAMALLSVGAEQAQAAAAREHSPRPAEEPMEQEPAL) match the Nuclear export signal motif. The segment at 1097–1122 (EQAQAAAAREHSPRPAEEPMEQEPAL) is disordered. Basic and acidic residues predominate over residues 1104–1113 (AREHSPRPAE). Serine 1108 bears the Phosphoserine mark.

Belongs to the histone deacetylase family. HD type 2 subfamily. Interacts with AHRR, BAHD1, BCOR, HDAC7, HDAC9, CTBP1, MEF2C, NCOR2, NRIP1, PHB2 and a 14-3-3 chaperone protein. Interacts with BCL6, DDIT3/CHOP, GRK5, KDM5B and MYOCD. Interacts with EP300 in the presence of TFAP2C. Interacts with ANKRA2. Interacts with CUL7 (as part of the 3M complex); negatively regulated by ANKRA2. Interacts with ZBTB7B; the interaction allows the recruitment of HDAC4 on CD8 loci for deacetylation and possible inhibition of CD8 genes expression. Interacts with RARA. Phosphorylated by AMPK, CaMK1, SIK1 and PRKD1 at Ser-259 and Ser-498. The phosphorylation is required for the export to the cytoplasm and inhibition. Phosphorylated by the PKC kinases PKN1 and PKN2, impairing nuclear import. Phosphorylated by GRK5, leading to nuclear export of HDAC5 and allowing MEF2-mediated transcription. In terms of processing, ubiquitinated. Polyubiquitination however does not lead to its degradation.

It is found in the nucleus. Its subcellular location is the cytoplasm. The enzyme catalyses N(6)-acetyl-L-lysyl-[histone] + H2O = L-lysyl-[histone] + acetate. Responsible for the deacetylation of lysine residues on the N-terminal part of the core histones (H2A, H2B, H3 and H4). Histone deacetylation gives a tag for epigenetic repression and plays an important role in transcriptional regulation, cell cycle progression and developmental events. Histone deacetylases act via the formation of large multiprotein complexes. Involved in muscle maturation by repressing transcription of myocyte enhancer MEF2C. During muscle differentiation, it shuttles into the cytoplasm, allowing the expression of myocyte enhancer factors. Serves as a corepressor of RARA and causes its deacetylation. In association with RARA, plays a role in the repression of microRNA-10a and thereby in the inflammatory response. This chain is Histone deacetylase 5 (HDAC5), found in Pongo abelii (Sumatran orangutan).